A 194-amino-acid polypeptide reads, in one-letter code: Prefoldin subunit 3 (194 aa).

The protein belongs to the prefoldin subunit alpha family. Heterohexamer of two PFD-alpha type and four PFD-beta type subunits. Interacts with itself. Interacts with Vhl and betaTub56D/tubulin beta-1 chain. Interacts with tubulin alpha-beta heterodimers by itself or in complex with Vhl. Does not interact with microtubules (MTs). In terms of tissue distribution, expressed in larval central nervous system (CNS) and pupal testis (at protein level).

The protein resides in the cytoplasm. Binds specifically to cytosolic chaperonin (c-CPN) and transfers target proteins to it. Binds to nascent polypeptide chain and promotes folding in an environment in which there are many competing pathways for nonnative proteins. Required for tubulin stability and spindle and centrosome formation in cooperation with Vhl. This is Prefoldin subunit 3 (mgr) from Drosophila melanogaster (Fruit fly).